Reading from the N-terminus, the 1250-residue chain is DNA excision repair protein ERCC-6-like (1250 aa).

Serine 14 is subject to Phosphoserine. Residues 21–54 form a TPR 1 repeat; sequence YLRYVKEAKEATKNGDLEEAFKLFNLAKDIFPNE. The region spanning 109-277 is the Helicase ATP-binding domain; sequence SLYRDGRKGG…WSLFDFACQG (169 aa). 122–129 contributes to the ATP binding site; the sequence is DDMGLGKT. Residues 228–231 carry the DEAH box motif; it reads DEAH. The 157-residue stretch at 464–620 folds into the Helicase C-terminal domain; that stretch reads FLMDLLKRLR…EKKNPFRYFS (157 aa). Residues 735–768 are disordered; it reads VFPSSTKKKCPKLNKPQPQPSPLLSTHHTQEEDI. Serine 755, serine 774, serine 807, and serine 810 each carry phosphoserine. Position 813 is a phosphothreonine (threonine 813). Phosphoserine is present on serine 820. The interval 926 to 946 is disordered; that stretch reads SALQDAQASEAKLEEEPSASS. Serine 969, serine 971, serine 995, serine 1004, and serine 1028 each carry phosphoserine. The tract at residues 1061-1092 is disordered; the sequence is ASTPKNDISPPGRFFSSQIPSSVNKSMNSRRS. Phosphothreonine; by PLK1 is present on threonine 1063. A Phosphoserine modification is found at serine 1069. Residues 1075-1087 show a composition bias toward polar residues; the sequence is FSSQIPSSVNKSM. Phosphoserine occurs at positions 1098 and 1118. The segment at 1110–1199 is disordered; sequence MEERLDDSSE…QDKAAEATND (90 aa). Over residues 1115-1124 the composition is skewed to basic and acidic residues; it reads DDSSEAKGPE. The segment covering 1125-1135 has biased composition (acidic residues); that stretch reads DYPEEGVEESS. Residues 1149-1173 show a composition bias toward polar residues; sequence ETLSSENKSSWLMTSKPSALAQETS. 2 positions are modified to phosphoserine: serine 1181 and serine 1188. A TPR 2 repeat occupies 1200–1233; the sequence is YETLVKRGKELKECGKIQEALNCLVKALDIKSAD.

Belongs to the SNF2/RAD54 helicase family. Interacts with PLK1, which phosphorylates it. Both proteins are mutually dependent on each other for correct subcellular localization. Interacts (via N-terminal TPR repeat) with BEND3 (via BEN domains 1 and 3); the interaction is direct. In terms of processing, phosphorylation by PLK1 prevents the association with chromosome arms and restricts its localization to the kinetochore-centromere region.

The protein localises to the chromosome. Its subcellular location is the centromere. It localises to the kinetochore. The catalysed reaction is ATP + H2O = ADP + phosphate + H(+). DNA helicase that acts as a tension sensor that associates with catenated DNA which is stretched under tension until it is resolved during anaphase. Functions as ATP-dependent DNA translocase. Can promote Holliday junction branch migration (in vitro). The chain is DNA excision repair protein ERCC-6-like (ERCC6L) from Homo sapiens (Human).